The chain runs to 455 residues: Ribulose bisphosphate carboxylase large chain (455 aa).

The residue at position 5 (lysine 5) is an N6,N6,N6-trimethyllysine. Residues asparagine 114 and threonine 164 each contribute to the substrate site. The active-site Proton acceptor is the lysine 166. Position 168 (lysine 168) interacts with substrate. Residues lysine 192, aspartate 194, and glutamate 195 each coordinate Mg(2+). The residue at position 192 (lysine 192) is an N6-carboxylysine. The active-site Proton acceptor is the histidine 285. Substrate-binding residues include arginine 286, histidine 318, and serine 370.

The protein belongs to the RuBisCO large chain family. Type I subfamily. As to quaternary structure, heterohexadecamer of 8 large chains and 8 small chains; disulfide-linked. The disulfide link is formed within the large subunit homodimers. It depends on Mg(2+) as a cofactor. In terms of processing, the disulfide bond which can form in the large chain dimeric partners within the hexadecamer appears to be associated with oxidative stress and protein turnover.

It is found in the plastid. The protein resides in the chloroplast. It carries out the reaction 2 (2R)-3-phosphoglycerate + 2 H(+) = D-ribulose 1,5-bisphosphate + CO2 + H2O. It catalyses the reaction D-ribulose 1,5-bisphosphate + O2 = 2-phosphoglycolate + (2R)-3-phosphoglycerate + 2 H(+). Its function is as follows. RuBisCO catalyzes two reactions: the carboxylation of D-ribulose 1,5-bisphosphate, the primary event in carbon dioxide fixation, as well as the oxidative fragmentation of the pentose substrate in the photorespiration process. Both reactions occur simultaneously and in competition at the same active site. This chain is Ribulose bisphosphate carboxylase large chain, found in Brownea coccinea (Rose of Venezuela).